The following is a 220-amino-acid chain: 7-cyano-7-deazaguanine synthase (220 aa).

10–20 (FSGGQDSTTCL) serves as a coordination point for ATP. 4 residues coordinate Zn(2+): cysteine 186, cysteine 195, cysteine 198, and cysteine 201.

It belongs to the QueC family. In terms of assembly, homodimer. The cofactor is Zn(2+).

The catalysed reaction is 7-carboxy-7-deazaguanine + NH4(+) + ATP = 7-cyano-7-deazaguanine + ADP + phosphate + H2O + H(+). It participates in purine metabolism; 7-cyano-7-deazaguanine biosynthesis. Catalyzes the ATP-dependent conversion of 7-carboxy-7-deazaguanine (CDG) to 7-cyano-7-deazaguanine (preQ(0)). The protein is 7-cyano-7-deazaguanine synthase of Bacillus cereus (strain AH187).